We begin with the raw amino-acid sequence, 349 residues long: Isopentenyl-diphosphate delta-isomerase (349 aa).

5–6 (RK) is a substrate binding site. FMN contacts are provided by residues Ser-61, 62–64 (SMT), Ser-92, and Asn-120. 92–94 (SMR) serves as a coordination point for substrate. Gln-159 is a substrate binding site. Glu-160 contacts Mg(2+). FMN-binding positions include Lys-189, Thr-219, 269–271 (GLR), and 290–291 (AR).

It belongs to the IPP isomerase type 2 family. Homooctamer. Dimer of tetramers. FMN is required as a cofactor. The cofactor is NADPH. Mg(2+) serves as cofactor.

It is found in the cytoplasm. It catalyses the reaction isopentenyl diphosphate = dimethylallyl diphosphate. Functionally, involved in the biosynthesis of isoprenoids. Catalyzes the 1,3-allylic rearrangement of the homoallylic substrate isopentenyl (IPP) to its allylic isomer, dimethylallyl diphosphate (DMAPP). This is Isopentenyl-diphosphate delta-isomerase from Picrophilus torridus (strain ATCC 700027 / DSM 9790 / JCM 10055 / NBRC 100828 / KAW 2/3).